The sequence spans 299 residues: MTKIKIVVIVGPTAVGKTALGISLAKAFNGEIISGDSQQVYRQLDIGTAKATQEEQEAAVHHLTDIREVTESYSAYDFVQDAQKAISDIVSRGKLPIIVGGTGLYLQSLLEGYHLGGQVDQEAVKAYRNELEQLDDHDLYERLQVNNITIEQVNRRRAIRALELAQFADELENAETAYEPLIIGLNDDRQVIYDRINQRVDRMLENGLLEEAKWLYEHYPTVQASRGIGYKELFPYFVGEMTLAEASDQLKQNTRRFAKRQLTWFRNRMAVSFTAITAPDYPQVVHDRVRDFLGQKEKS.

11–18 (GPTAVGKT) is a binding site for ATP. Residue 13–18 (TAVGKT) coordinates substrate. Residues 36–39 (DSQQ) are interaction with substrate tRNA.

The protein belongs to the IPP transferase family. In terms of assembly, monomer. The cofactor is Mg(2+).

The catalysed reaction is adenosine(37) in tRNA + dimethylallyl diphosphate = N(6)-dimethylallyladenosine(37) in tRNA + diphosphate. Catalyzes the transfer of a dimethylallyl group onto the adenine at position 37 in tRNAs that read codons beginning with uridine, leading to the formation of N6-(dimethylallyl)adenosine (i(6)A). The protein is tRNA dimethylallyltransferase of Streptococcus pyogenes serotype M28 (strain MGAS6180).